Consider the following 435-residue polypeptide: Methionine aminopeptidase 2-2 (435 aa).

The interval 1-92 (MAAQTTEKLQ…VPVSNLFPNN (92 aa)) is disordered. Residues 24 to 33 (DAPAAGQAEA) are compositionally biased toward low complexity. Over residues 34-45 (GEAEEDSDDEKD) the composition is skewed to acidic residues. The segment covering 59-73 (AKKKKRKSKKKKKGG) has biased composition (basic residues). Histidine 197 lines the substrate pocket. A divalent metal cation-binding residues include aspartate 217, aspartate 228, and histidine 297. Residue histidine 305 coordinates substrate. The a divalent metal cation site is built by glutamate 330 and glutamate 425.

This sequence belongs to the peptidase M24A family. Methionine aminopeptidase eukaryotic type 2 subfamily. Co(2+) is required as a cofactor. Requires Zn(2+) as cofactor. The cofactor is Mn(2+). It depends on Fe(2+) as a cofactor.

The protein resides in the cytoplasm. It catalyses the reaction Release of N-terminal amino acids, preferentially methionine, from peptides and arylamides.. Functionally, cotranslationally removes the N-terminal methionine from nascent proteins. The N-terminal methionine is often cleaved when the second residue in the primary sequence is small and uncharged (Met-Ala-, Cys, Gly, Pro, Ser, Thr, or Val). In Aspergillus clavatus (strain ATCC 1007 / CBS 513.65 / DSM 816 / NCTC 3887 / NRRL 1 / QM 1276 / 107), this protein is Methionine aminopeptidase 2-2.